The chain runs to 200 residues: MAIEFVATSKLPTKFGDFNISVFQDPVTGEEHVALSKGLEIAPTGPVLVRIHSECLTGDAFASLKCDCGPQLQATQKLINDVGQGVILYLRQEGRGIGLTNKIRAYALQDQGHDTVDANLLLNLPADARRYDMCSIMLDHLQVKQVKLITNNPLKLKALTDLGINVIDRVPLTVGKNPFNEQYLKTKKERMAHLYQKDDF.

50–54 (RIHSE) is a GTP binding site. Cysteine 55, cysteine 66, and cysteine 68 together coordinate Zn(2+). GTP-binding positions include glutamine 71, 93–95 (EGR), and threonine 115. The active-site Proton acceptor is the aspartate 127. Arginine 129 (nucleophile) is an active-site residue. Residues threonine 150 and lysine 155 each coordinate GTP.

Belongs to the GTP cyclohydrolase II family. Zn(2+) is required as a cofactor.

It carries out the reaction GTP + 4 H2O = 2,5-diamino-6-hydroxy-4-(5-phosphoribosylamino)-pyrimidine + formate + 2 phosphate + 3 H(+). It participates in cofactor biosynthesis; riboflavin biosynthesis; 5-amino-6-(D-ribitylamino)uracil from GTP: step 1/4. Its function is as follows. Catalyzes the conversion of GTP to 2,5-diamino-6-ribosylamino-4(3H)-pyrimidinone 5'-phosphate (DARP), formate and pyrophosphate. The polypeptide is GTP cyclohydrolase-2 (Acinetobacter baylyi (strain ATCC 33305 / BD413 / ADP1)).